The sequence spans 80 residues: MAERSQNLQDLFLNTVRKQKISLTIFLINGVKLTGVVTSFDNFCVLLRRDGHSQLVYKHAISTIMPGQPMQMFESEEAAS.

A Sm domain is found at 10 to 70 (DLFLNTVRKQ…ISTIMPGQPM (61 aa)).

The protein belongs to the Hfq family. As to quaternary structure, homohexamer.

In terms of biological role, RNA chaperone that binds small regulatory RNA (sRNAs) and mRNAs to facilitate mRNA translational regulation in response to envelope stress, environmental stress and changes in metabolite concentrations. Also binds with high specificity to tRNAs. This chain is RNA-binding protein Hfq, found in Rhizobium etli (strain CIAT 652).